Consider the following 87-residue polypeptide: Large ribosomal subunit protein uL23c (87 aa).

The protein belongs to the universal ribosomal protein uL23 family. In terms of assembly, part of the 50S ribosomal subunit.

It is found in the plastid. Its subcellular location is the chloroplast. Binds to 23S rRNA. The chain is Large ribosomal subunit protein uL23c (rpl23) from Ostreococcus tauri.